A 104-amino-acid chain; its full sequence is MVRYRVRSPSERPHEEYRQLVNWQEQGRNGQEEQGLSAEGGEVYGRTHQGYSSYRRRRCSRRRRYRIHRRRSRSCRRRRRRSCRYRRRPRRGCRSRRRRRCRRY.

Phosphoserine occurs at positions 8 and 10. The segment at W23–Y104 is disordered. The span at Q24–G35 shows a compositional bias: low complexity. A Phosphoserine modification is found at S37. Positions Y54–Y104 are enriched in basic residues.

Belongs to the protamine P2 family. In terms of assembly, interacts with TDRP. In terms of processing, proteolytic processing into mature chains is required for histone eviction during spermatogenesis. Transition proteins (TNP1 and TNP2) are required for processing. Testis.

The protein resides in the nucleus. It localises to the chromosome. In terms of biological role, protamines substitute for histones in the chromatin of sperm during the haploid phase of spermatogenesis. They compact sperm DNA into a highly condensed, stable and inactive complex. This chain is Protamine-2 (PRM2), found in Callithrix jacchus (White-tufted-ear marmoset).